Here is a 288-residue protein sequence, read N- to C-terminus: Diaminopimelate epimerase (288 aa).

Residues N14 and N67 each coordinate substrate. C76 acts as the Proton donor in catalysis. Residues 77-78 (GN), N166, N199, and 217-218 (ER) contribute to the substrate site. The active-site Proton acceptor is the C226. 227–228 (GT) provides a ligand contact to substrate.

Belongs to the diaminopimelate epimerase family. Homodimer.

The protein localises to the cytoplasm. The catalysed reaction is (2S,6S)-2,6-diaminopimelate = meso-2,6-diaminopimelate. It functions in the pathway amino-acid biosynthesis; L-lysine biosynthesis via DAP pathway; DL-2,6-diaminopimelate from LL-2,6-diaminopimelate: step 1/1. Functionally, catalyzes the stereoinversion of LL-2,6-diaminopimelate (L,L-DAP) to meso-diaminopimelate (meso-DAP), a precursor of L-lysine and an essential component of the bacterial peptidoglycan. This is Diaminopimelate epimerase from Bacillus thuringiensis (strain Al Hakam).